A 388-amino-acid polypeptide reads, in one-letter code: Chorismate synthase (388 aa).

NADP(+)-binding residues include Arg-39 and Arg-45. Residues 132-134, 251-252, Gly-296, 311-315, and Arg-337 contribute to the FMN site; these read RSS, NA, and KPIPT.

This sequence belongs to the chorismate synthase family. In terms of assembly, homotetramer. It depends on FMNH2 as a cofactor.

The enzyme catalyses 5-O-(1-carboxyvinyl)-3-phosphoshikimate = chorismate + phosphate. The protein operates within metabolic intermediate biosynthesis; chorismate biosynthesis; chorismate from D-erythrose 4-phosphate and phosphoenolpyruvate: step 7/7. In terms of biological role, catalyzes the anti-1,4-elimination of the C-3 phosphate and the C-6 proR hydrogen from 5-enolpyruvylshikimate-3-phosphate (EPSP) to yield chorismate, which is the branch point compound that serves as the starting substrate for the three terminal pathways of aromatic amino acid biosynthesis. This reaction introduces a second double bond into the aromatic ring system. The protein is Chorismate synthase of Staphylococcus aureus (strain MRSA252).